Consider the following 145-residue polypeptide: MPNKFLIIDNSILPDIFEKVVKVKELLANGKVKDITEGVKTVGISRSTYYKYKDFVFSVSEGVKSQKATIGLLLGHERGTLSKILDRIAEYQGNILTINQDIPINNTANVSITFDISQMSIGLKELVEEIKNTKNVIKVDLIAME.

Residues 69–144 (TIGLLLGHER…NVIKVDLIAM (76 aa)) enclose the ACT domain.

It belongs to the UPF0735 family.

This Clostridium botulinum (strain Okra / Type B1) protein is UPF0735 ACT domain-containing protein CLD_1535.